A 113-amino-acid chain; its full sequence is Protein CTLA-2-beta (113 aa).

A run of 2 repeats spans residues 15 to 17 and 18 to 20. The tract at residues 15–20 is 2 X 3 AA tandem repeats of E-W-K; sequence EWKEWK.

The protein to the propeptide regions of cysteine proteases.

Not known, expressed in activated T-cell. The protein is Protein CTLA-2-beta (Ctla2b) of Mus musculus (Mouse).